The sequence spans 1474 residues: Alpha-2-macroglobulin-P (1474 aa).

An N-terminal signal peptide occupies residues 1-32 (MGKRWLPSLALLPLPPPLLLLLLLLLPTNASA). C55 and C93 are oxidised to a cystine. Residues N62, N77, and N253 are each glycosylated (N-linked (GlcNAc...) asparagine). Intrachain disulfides connect C257/C305 and C275/C293. N-linked (GlcNAc...) asparagine glycosylation occurs at N402. 3 disulfide bridges follow: C476/C569, C601/C771, and C650/C697. The tract at residues 623-752 (LVYDLLPVKD…LVIVDSTGVA (130 aa)) is bait region. N-linked (GlcNAc...) asparagine glycosylation is found at N654 and N774. Disulfide bonds link C821–C849, C847–C883, C921–C1321, C1079–C1127, and C1352–C1467. The N-linked (GlcNAc...) asparagine glycan is linked to N869. Positions 972 to 975 (CGEQ) form a cross-link, isoglutamyl cysteine thioester (Cys-Gln). N-linked (GlcNAc...) asparagine glycosylation is present at N991. Residue N1366 is glycosylated (N-linked (GlcNAc...) asparagine).

It belongs to the protease inhibitor I39 (alpha-2-macroglobulin) family. Homotetramer; disulfide-linked. Expressed in uterus, mesometrial lymphoid aggregate and mammary tissue during pregnancy. Expressed in ovary, testis and kidney. Low level expression in heart. Not expressed in liver.

It localises to the secreted. Functionally, is able to inhibit all four classes of proteinases by a unique 'trapping' mechanism. This protein has a peptide stretch, called the 'bait region' which contains specific cleavage sites for different proteinases. When a proteinase cleaves the bait region, a conformational change is induced in the protein which traps the proteinase. The entrapped enzyme remains active against low molecular weight substrates (activity against high molecular weight substrates is greatly reduced). Following cleavage in the bait region a thioester bond is hydrolyzed and mediates the covalent binding of the protein to the proteinase. The chain is Alpha-2-macroglobulin-P from Mus musculus (Mouse).